Consider the following 472-residue polypeptide: Alanine--anticapsin ligase (472 aa).

Glu-109 contacts Mg(2+). Positions 138 and 178 each coordinate ATP. In terms of domain architecture, ATP-grasp spans 142-355 (RDAFNKAGVK…MAQLLLDVLC (214 aa)). Leu-182 serves as a coordination point for Mg(2+). Residues 184–185 (SS), 226–229 (EEFL), and Gln-268 contribute to the ATP site. Substrate is bound by residues Glu-273 and 309 to 311 (HTE). Mg(2+)-binding residues include Glu-311 and Glu-324. Residue 328–331 (RFAG) coordinates substrate.

In terms of assembly, monomer or homodimer. Requires Mg(2+) as cofactor.

The enzyme catalyses L-anticapsin + L-alanine + ATP = bacilysin + ADP + phosphate + H(+). Its pathway is antibiotic biosynthesis; bacilysin biosynthesis. Part of the bacABCDEFG operon responsible for the biosynthesis of bacilysin, an irreversible inactivator of the glutaminase domain of glucosamine synthetase. Catalyzes the formation of alpha-dipeptides from various L-amino acids in the presence of ATP. In vivo catalyzes the ligation of L-alanine and L-anticapsin (epoxycyclohexanonyl-Ala) to produce the final bacilysin antibiotic (L-Ala-L-4S-cyclohexenonyl-Ala dipeptide). The substrate specificity is restricted to small amino acids such as L-Ala, for the N-terminal end of the dipeptide, whereas a wide range of hydrophobic amino acids such as L-Phe, L-Tyr and L-Met are recognized for the C-terminal end. The polypeptide is Alanine--anticapsin ligase (Bacillus subtilis (strain 168)).